The primary structure comprises 1969 residues: TP53-binding protein 1 (1969 aa).

The segment at 1-24 (MPGEQMDPTGSQLDSDFSQQDTPC) is disordered. The segment covering 8-22 (PTGSQLDSDFSQQDT) has biased composition (polar residues). 3 positions are modified to phosphoserine: Ser-30, Ser-68, and Ser-73. Positions 67 to 168 (VSNPEQSAVE…DSLAAEDSAS (102 aa)) are disordered. The span at 69–85 (NPEQSAVEQGDSNSSFN) shows a compositional bias: polar residues. The span at 86-95 (EHLKEKKASD) shows a compositional bias: basic and acidic residues. The segment covering 101 to 110 (HLGTSGSISQ) has biased composition (polar residues). Residue Ser-109 is modified to Phosphoserine. The span at 135 to 148 (PEEEKEEEELEEEK) shows a compositional bias: acidic residues. Residues 158–168 (ADSLAAEDSAS) are compositionally biased toward low complexity. Ser-169, Ser-179, and Ser-181 each carry phosphoserine. A Glycyl lysine isopeptide (Lys-Gly) (interchain with G-Cter in SUMO1); alternate cross-link involves residue Lys-220. Lys-220 is covalently cross-linked (Glycyl lysine isopeptide (Lys-Gly) (interchain with G-Cter in SUMO2); alternate). Disordered stretches follow at residues 254–337 (EQNL…VSTP), 352–599 (LVQE…CKGR), and 614–707 (DSGS…CPEA). Ser-267 and Ser-268 each carry phosphoserine. Over residues 277–288 (ETKEQVPARELL) the composition is skewed to basic and acidic residues. Polar residues predominate over residues 294–324 (VQPSSEPEVSSTQEDLFDQSSKTASDGCSTP). A Phosphoserine modification is found at Ser-297. Residue Thr-305 is modified to Phosphothreonine. Residues Ser-368, Ser-382, and Ser-397 each carry the phosphoserine modification. The span at 407–419 (QKLHDDEAMETEK) shows a compositional bias: basic and acidic residues. Positions 426–442 (PAVSPQASTPVSRSTPV) are enriched in polar residues. Phosphoserine occurs at positions 429, 452, and 464. Positions 481 to 490 (HSSSLTVECS) are enriched in polar residues. Residues 491 to 501 (KTSESEPKNFT) show a composition bias toward basic and acidic residues. Ser-507, Ser-518, Ser-523, and Ser-525 each carry phosphoserine. Polar residues predominate over residues 517-528 (LSTSEYSQSSKM). A phosphothreonine mark is found at Thr-543 and Thr-548. Phosphoserine is present on residues Ser-552 and Ser-579. Polar residues predominate over residues 566 to 582 (VLVTPSQDDQVEMSQNV). A compositionally biased stretch (basic and acidic residues) spans 583-599 (DKAKEDETEDRGDCKGR). Over residues 614-634 (DSGSQAVPSPATRSEALSSVL) the composition is skewed to polar residues. Phosphoserine is present on residues Ser-622, Ser-627, Ser-631, and Ser-632. Positions 640–649 (MDTKEHHPEE) are enriched in basic and acidic residues. Thr-662 carries the post-translational modification Phosphothreonine. Residues 666–675 (SHREEPKEEP) show a composition bias toward basic and acidic residues. A phosphoserine mark is found at Ser-684, Ser-716, Ser-719, and Ser-763. The interval 754-870 (KEPSPRADVS…DDKQLGPEGA (117 aa)) is disordered. Over residues 790 to 818 (AENRLDTPEEKRIECDGDSKAETTEKDAV) the composition is skewed to basic and acidic residues. Ser-822 is subject to Phosphoserine. The segment covering 830-839 (VRDEPVRPDQ) has biased composition (basic and acidic residues). Residue Thr-912 is modified to Phosphothreonine. Lys-920 is covalently cross-linked (Glycyl lysine isopeptide (Lys-Gly) (interchain with G-Cter in SUMO2)). The tract at residues 927–1017 (STPIGISNYP…GSTAIAEPVA (91 aa)) is disordered. Positions 935–949 (YPESTIATSDVTSES) are enriched in polar residues. Basic and acidic residues predominate over residues 961 to 975 (EKGDSESAPEMDGKL). Ser-965 is modified (phosphoserine). Residue Lys-974 forms a Glycyl lysine isopeptide (Lys-Gly) (interchain with G-Cter in SUMO2) linkage. Ser-1018 bears the Phosphoserine mark. Disordered regions lie at residues 1034 to 1144 (QEKE…MDRP), 1178 to 1231 (GTST…PHGH), and 1267 to 1478 (TEET…DSSS). Over residues 1060-1074 (EEDKERPDVTPKLRQ) the composition is skewed to basic and acidic residues. Phosphoserine occurs at positions 1075 and 1096. Low complexity predominate over residues 1099 to 1112 (SQQRASQEQRASQE). Ser-1115 bears the Phosphoserine mark. Positions 1178 to 1197 (GTSTAEQNSGKQDATVQTER) are enriched in polar residues. Thr-1211 carries the phosphothreonine modification. Phosphoserine is present on residues Ser-1213 and Ser-1216. Positions 1269-1282 (ETEEPIVECQECET) are enriched in acidic residues. A compositionally biased stretch (low complexity) spans 1295–1326 (DLGDISSFSSKASSSHHTSSGTSLSAIHSSGS). Ser-1314 carries the post-translational modification Phosphoserine. Residue Arg-1329 is modified to Omega-N-methylarginine. Ser-1339 is subject to Phosphoserine. Position 1352 is an omega-N-methylarginine (Arg-1352). Ser-1359 carries the phosphoserine modification. Lys-1362 participates in a covalent cross-link: Glycyl lysine isopeptide (Lys-Gly) (interchain with G-Cter in SUMO2). A Phosphoserine modification is found at Ser-1365. Positions 1393–1400 (RGRGRRGR) match the GAR motif. A phosphoserine mark is found at Ser-1423 and Ser-1427. A Glycyl lysine isopeptide (Lys-Gly) (interchain with G-Cter in SUMO1); alternate cross-link involves residue Lys-1431. A Glycyl lysine isopeptide (Lys-Gly) (interchain with G-Cter in SUMO2); alternate cross-link involves residue Lys-1431. Phosphoserine occurs at positions 1457, 1459, 1470, and 1471. Over residues 1469–1478 (GSSDGLDSSS) the composition is skewed to low complexity. Residues 1481-1600 (NSFVGLRVVA…NRLREQYGLG (120 aa)) are tudor-like. The segment at 1492–1520 (WSSNGYFYSGKITRDVGAGKYKLLFDDGY) is interaction with dimethylated histone H4. Lys-1560 is covalently cross-linked (Glycyl lysine isopeptide (Lys-Gly) (interchain with G-Cter in SUMO1); alternate). Lys-1560 is covalently cross-linked (Glycyl lysine isopeptide (Lys-Gly) (interchain with G-Cter in SUMO2); alternate). Residues 1601–1628 (PYEAVTPLTKAADISLDNLVEGKRKRRS) carry the UDR motif. Thr-1606 is subject to Phosphothreonine. 3 positions are modified to phosphoserine: Ser-1615, Ser-1628, and Ser-1632. The interval 1624 to 1715 (RKRRSNISSP…IGEPSVLEEP (92 aa)) is disordered. A compositionally biased stretch (low complexity) spans 1631 to 1648 (SSPVTPTAASSSSTTPTR). Residues Thr-1635 and Thr-1645 each carry the phosphothreonine modification. 3 positions are modified to phosphoserine: Ser-1653, Ser-1670, and Ser-1675. Lys-1682 participates in a covalent cross-link: Glycyl lysine isopeptide (Lys-Gly) (interchain with G-Cter in ubiquitin). 2 positions are modified to phosphoserine: Ser-1698 and Ser-1756. BRCT domains lie at 1749 to 1845 (LDGP…NYLL) and 1861 to 1961 (PREN…QHPK).

As to quaternary structure, homoligomer. Interacts with p53/TP53 (via the central domain). Interacts with DCLRE1C. Interacts with histone H2AX and this requires phosphorylation of H2AX on 'Ser-139'. Interacts with histone H4 that has been dimethylated at 'Lys-20' (H4K20me2). Has low affinity for histone H4 containing monomethylated 'Lys-20' (H4K20me1). Does not bind histone H4 containing unmethylated or trimethylated 'Lys-20' (H4K20me3). Has low affinity for histone H3 that has been dimethylated on 'Lys-79'. Has very low affinity for histone H3 that has been monomethylated on 'Lys-79' (in vitro). Does not bind unmethylated histone H3. Interacts with histone H2A monoubiquitinated at 'Lys-15' (H2AK15Ub). Interacts with PWWP3A/EXPAND1. Interacts with CHEK2; modulates CHEK2 phosphorylation at 'Thr-68' in response to infrared. Interacts with MSL1; this interaction may be required for MSL1 DNA repair activity, but not for histone acetyltransferase activity. Interacts (when phosphorylated by ATM) with RIF1. Interacts (via the Tudor-like domain) with NUDT16L1/TIRR; interaction masks the Tudor-like domain and prevents recruitment to chromatin. Interacts with PAXIP1. Interacts with IFI202A. Interacts with SHLD2. Interacts (when phosphorylated) with TOPBP1. Interacts with GFI1; promoting methylation by PRMT1. Interacts with (phosphorylated) DYNLL1; specifically binds DYNLL1 phosphorylated at 'Ser-88' and promotes its recruitment to double stand breaks (DSBs). In terms of processing, phosphorylated at basal level in the absence of DNA damage. Phosphorylated by ATM in response to DNA damage: phosphorylation at different sites promotes interaction with different set of proteins: phosphorylation at the N-terminus by ATM (residues from 11-181) promotes interaction with PAXIP1 and non-homologous end joining (NHEJ) of dysfunctional telomeres. Phosphorylation by ATM at residues that are located more C-terminus (residues 300-650) leads to promote interaction with RIF1. Interaction with RIF1 leads to disrupt interaction with NUDT16L1/TIRR. Phosphorylation at Thr-1606 and Ser-1615 in the UDR motif blocks interaction with H2AK15ub. Dephosphorylated by PPP4C. Hyperphosphorylation during mitosis correlates with its exclusion from chromatin and DNA lesions. Hyperphosphorylated in an ATR-dependent manner in response to DNA damage induced by UV irradiation. Dephosphorylated by PPP5C. Phosphorylation at Ser-368 and Thr-662 promotes interaction with TOPBP1. Phosphorylated by VRK1. Post-translationally, asymmetrically dimethylated on Arg residues by PRMT1. Methylation is required for DNA binding. Monoubiquitinated at Lys-1682 by MSL2 is reponse to DNA damage, leading to its stabilization.

The protein localises to the nucleus. It is found in the chromosome. Its subcellular location is the centromere. The protein resides in the kinetochore. Double-strand break (DSB) repair protein involved in response to DNA damage, telomere dynamics and class-switch recombination (CSR) during antibody genesis. Plays a key role in the repair of double-strand DNA breaks (DSBs) in response to DNA damage by promoting non-homologous end joining (NHEJ)-mediated repair of DSBs and specifically counteracting the function of the homologous recombination (HR) repair protein BRCA1. In response to DSBs, phosphorylation by ATM promotes interaction with RIF1 and dissociation from NUDT16L1/TIRR, leading to recruitment to DSBs sites. Recruited to DSBs sites by recognizing and binding histone H2A monoubiquitinated at 'Lys-15' (H2AK15Ub) and histone H4 dimethylated at 'Lys-20' (H4K20me2), two histone marks that are present at DSBs sites. Required for immunoglobulin class-switch recombination (CSR) during antibody genesis, a process that involves the generation of DNA DSBs. Participates in the repair and the orientation of the broken DNA ends during CSR. In contrast, it is not required for classic NHEJ and V(D)J recombination. Promotes NHEJ of dysfunctional telomeres. The protein is TP53-binding protein 1 of Mus musculus (Mouse).